A 321-amino-acid polypeptide reads, in one-letter code: Lipoyl synthase (321 aa).

Residues Cys-68, Cys-73, Cys-79, Cys-94, Cys-98, Cys-101, and Ser-308 each coordinate [4Fe-4S] cluster. Positions 80–297 (FNHGTATFMI…KAAAMDMGFT (218 aa)) constitute a Radical SAM core domain.

This sequence belongs to the radical SAM superfamily. Lipoyl synthase family. It depends on [4Fe-4S] cluster as a cofactor.

Its subcellular location is the cytoplasm. It catalyses the reaction [[Fe-S] cluster scaffold protein carrying a second [4Fe-4S](2+) cluster] + N(6)-octanoyl-L-lysyl-[protein] + 2 oxidized [2Fe-2S]-[ferredoxin] + 2 S-adenosyl-L-methionine + 4 H(+) = [[Fe-S] cluster scaffold protein] + N(6)-[(R)-dihydrolipoyl]-L-lysyl-[protein] + 4 Fe(3+) + 2 hydrogen sulfide + 2 5'-deoxyadenosine + 2 L-methionine + 2 reduced [2Fe-2S]-[ferredoxin]. It participates in protein modification; protein lipoylation via endogenous pathway; protein N(6)-(lipoyl)lysine from octanoyl-[acyl-carrier-protein]: step 2/2. Its function is as follows. Catalyzes the radical-mediated insertion of two sulfur atoms into the C-6 and C-8 positions of the octanoyl moiety bound to the lipoyl domains of lipoate-dependent enzymes, thereby converting the octanoylated domains into lipoylated derivatives. The polypeptide is Lipoyl synthase (Erwinia tasmaniensis (strain DSM 17950 / CFBP 7177 / CIP 109463 / NCPPB 4357 / Et1/99)).